Reading from the N-terminus, the 143-residue chain is uncharacterized protein (143 aa).

Residues 35–59 (ITKDRGDRDDGRYGEPRIQRKPGQL) form a disordered region. Residues 36-52 (TKDRGDRDDGRYGEPRI) are compositionally biased toward basic and acidic residues.

This is an uncharacterized protein from Streptomyces fradiae (Streptomyces roseoflavus).